Reading from the N-terminus, the 92-residue chain is Putative membrane protein insertion efficiency factor (92 aa).

It belongs to the UPF0161 family.

It is found in the cell membrane. Functionally, could be involved in insertion of integral membrane proteins into the membrane. The polypeptide is Putative membrane protein insertion efficiency factor (Tropheryma whipplei (strain TW08/27) (Whipple's bacillus)).